A 341-amino-acid chain; its full sequence is MNSSPESTLEQASRLLAAAGSVAELDQVRVRYLGKKGEFTEQMKTLGTLSPEERKEFGQRVNQARDEFQRLLERRKAALEAEALARRLSSETIDVTLPGRGQRLGGLHPVTLTLRRITRLFRSVGFSVVEGPEIEDDFHNFEALNIPAHHPARAMHDTFYFSEHLLLRTHTSPVQIRVMESGQPPLRVIAPGRVYRCDSDLTHTPMFHQVEGFWVDEQVSFADLKGTLYEFLTGFFEKDCAVRFRPSYFPFTEPSAEVDIECVICDGRGCRVCKHSGWLEVMGCGMIHPRVFEAVGIDPERYSGFAFGLGVERLTMLRYGINDLRLFFENDLRFLRQFKPF.

Glu253 is a binding site for Mg(2+).

This sequence belongs to the class-II aminoacyl-tRNA synthetase family. Phe-tRNA synthetase alpha subunit type 1 subfamily. As to quaternary structure, tetramer of two alpha and two beta subunits. It depends on Mg(2+) as a cofactor.

Its subcellular location is the cytoplasm. It catalyses the reaction tRNA(Phe) + L-phenylalanine + ATP = L-phenylalanyl-tRNA(Phe) + AMP + diphosphate + H(+). The sequence is that of Phenylalanine--tRNA ligase alpha subunit from Methylococcus capsulatus (strain ATCC 33009 / NCIMB 11132 / Bath).